A 284-amino-acid polypeptide reads, in one-letter code: NAD(P)H-hydrate epimerase (284 aa).

The N-terminal 55 residues, methionine 1–tyrosine 55, are a transit peptide targeting the mitochondrion. In terms of domain architecture, YjeF N-terminal spans alanine 61–leucine 271. A (6S)-NADPHX-binding site is contributed by asparagine 115–aspartate 119. A K(+)-binding site is contributed by asparagine 116. Residue lysine 140 is modified to N6-succinyllysine. Aspartate 181 is a K(+) binding site. Residues glycine 185–alanine 191 and aspartate 214 each bind (6S)-NADPHX. A K(+)-binding site is contributed by serine 217.

This sequence belongs to the NnrE/AIBP family. As to quaternary structure, homodimer. Interacts with APOA1 and APOA2. K(+) is required as a cofactor. Undergoes physiological phosphorylation during sperm capacitation, downstream to PKA activation.

The protein resides in the mitochondrion. It is found in the secreted. It catalyses the reaction (6R)-NADHX = (6S)-NADHX. It carries out the reaction (6R)-NADPHX = (6S)-NADPHX. Its function is as follows. Catalyzes the epimerization of the S- and R-forms of NAD(P)HX, a damaged form of NAD(P)H that is a result of enzymatic or heat-dependent hydration. This is a prerequisite for the S-specific NAD(P)H-hydrate dehydratase to allow the repair of both epimers of NAD(P)HX. Accelerates cholesterol efflux from endothelial cells to high-density lipoprotein (HDL) and thereby regulates angiogenesis. This chain is NAD(P)H-hydrate epimerase, found in Monodelphis domestica (Gray short-tailed opossum).